The following is a 178-amino-acid chain: Membrane-spanning protein YciB (178 aa).

Transmembrane regions (helical) follow at residues 22–42, 52–72, 76–96, 121–141, and 151–171; these read IFIASFSLMIASLFTFIITSI, LINLIFVIVFGFLTLFYHNSS, WKVTIIYFLISIVFLINYLFI, LFWSIFFLICAVSNTYIILYF, and IFGLTILTLIAVIINGFYIYF.

Belongs to the YciB family.

Its subcellular location is the cell membrane. Plays a role in cell envelope biogenesis, maintenance of cell envelope integrity and membrane homeostasis. The polypeptide is Membrane-spanning protein YciB (Buchnera aphidicola subsp. Baizongia pistaciae (strain Bp)).